The following is a 132-amino-acid chain: Small ribosomal subunit protein uS8 (132 aa).

The protein belongs to the universal ribosomal protein uS8 family. In terms of assembly, part of the 30S ribosomal subunit. Contacts proteins S5 and S12.

Its function is as follows. One of the primary rRNA binding proteins, it binds directly to 16S rRNA central domain where it helps coordinate assembly of the platform of the 30S subunit. The protein is Small ribosomal subunit protein uS8 of Geotalea uraniireducens (strain Rf4) (Geobacter uraniireducens).